The primary structure comprises 466 residues: Cysteine--tRNA ligase (466 aa).

Cys-30 contributes to the Zn(2+) binding site. Positions 32–42 (PTVYNYIHIGN) match the 'HIGH' region motif. Cys-210, His-235, and Glu-239 together coordinate Zn(2+). The 'KMSKS' region motif lies at 267 to 271 (KMSKS). Residue Lys-270 coordinates ATP. Ser-271 is subject to Phosphoserine.

The protein belongs to the class-I aminoacyl-tRNA synthetase family. As to quaternary structure, monomer. Zn(2+) serves as cofactor.

The protein localises to the cytoplasm. The catalysed reaction is tRNA(Cys) + L-cysteine + ATP = L-cysteinyl-tRNA(Cys) + AMP + diphosphate. This is Cysteine--tRNA ligase from Geobacillus sp. (strain WCH70).